Reading from the N-terminus, the 336-residue chain is Homoserine O-acetyltransferase (336 aa).

The 264-residue stretch at 58–321 (AILVLHALTG…PHGHDAFLID (264 aa)) folds into the AB hydrolase-1 domain. Catalysis depends on serine 147, which acts as the Nucleophile. Arginine 204 contributes to the substrate binding site. Active-site residues include aspartate 286 and histidine 315. Aspartate 316 contributes to the substrate binding site.

This sequence belongs to the AB hydrolase superfamily. MetX family. In terms of assembly, homodimer.

It is found in the cytoplasm. The catalysed reaction is L-homoserine + acetyl-CoA = O-acetyl-L-homoserine + CoA. It functions in the pathway amino-acid biosynthesis; L-methionine biosynthesis via de novo pathway; O-acetyl-L-homoserine from L-homoserine: step 1/1. In terms of biological role, transfers an acetyl group from acetyl-CoA to L-homoserine, forming acetyl-L-homoserine. The chain is Homoserine O-acetyltransferase from Deinococcus geothermalis (strain DSM 11300 / CIP 105573 / AG-3a).